Consider the following 240-residue polypeptide: 7-cyano-7-deazaguanine synthase (240 aa).

18-28 (FSGGQDSTTCL) is an ATP binding site. Residues Cys-197, Cys-206, Cys-209, and Cys-212 each coordinate Zn(2+).

This sequence belongs to the QueC family. It depends on Zn(2+) as a cofactor.

It catalyses the reaction 7-carboxy-7-deazaguanine + NH4(+) + ATP = 7-cyano-7-deazaguanine + ADP + phosphate + H2O + H(+). The protein operates within purine metabolism; 7-cyano-7-deazaguanine biosynthesis. Functionally, catalyzes the ATP-dependent conversion of 7-carboxy-7-deazaguanine (CDG) to 7-cyano-7-deazaguanine (preQ(0)). The polypeptide is 7-cyano-7-deazaguanine synthase (Shewanella baltica (strain OS223)).